Here is a 177-residue protein sequence, read N- to C-terminus: Disulfide bond formation protein B (177 aa).

The Cytoplasmic segment spans residues 1–14; it reads MLALLKQFSEKRFV. Residues 15-31 form a helical membrane-spanning segment; the sequence is WFLLAFSSLALESTALY. The Periplasmic segment spans residues 32–49; the sequence is FQYGMGLQPCVLCVYERL. Residues C41 and C44 are joined by a disulfide bond. The helical transmembrane segment at 50 to 65 threads the bilayer; that stretch reads AMIGLFVAGTIALLQP. Residues 66 to 72 are Cytoplasmic-facing; it reads RVFILRL. A helical membrane pass occupies residues 73 to 90; the sequence is IALALGLFSSIKGLLISF. Over 91-145 the chain is Periplasmic; the sequence is RHLDLQMNPAPWKQCEFIPNFPETLPFHQWFPFIFNPTGSCNESQWSLFGLTMVQ. Residues C105 and C131 are joined by a disulfide bond. The helical transmembrane segment at 146–164 threads the bilayer; it reads WLVVIFSLYVVILTLLLIA. Residues 165-177 lie on the Cytoplasmic side of the membrane; it reads QVIKTRKQRRLFN.

Belongs to the DsbB family.

Its subcellular location is the cell inner membrane. In terms of biological role, required for disulfide bond formation in some periplasmic proteins. Acts by oxidizing the DsbA protein. This is Disulfide bond formation protein B from Haemophilus influenzae (strain ATCC 51907 / DSM 11121 / KW20 / Rd).